We begin with the raw amino-acid sequence, 35 residues long: uncharacterized protein (35 aa).

A helical transmembrane segment spans residues 14-34; that stretch reads VVVLLAICGAMLLLRWAAMIW.

The protein localises to the membrane. This is an uncharacterized protein from Escherichia coli (strain K12).